A 332-amino-acid polypeptide reads, in one-letter code: HTH-type transcriptional regulator RegA (332 aa).

Residues 1-57 (MATSIKDVAREAGVSIATVSRVLNDIDVVNEDTKKKVLDAIKELGYRPNIVARSLKT) enclose the HTH lacI-type domain. The segment at residues 5–24 (IKDVAREAGVSIATVSRVLN) is a DNA-binding region (H-T-H motif).

Involved in the regulation of amylase production. This chain is HTH-type transcriptional regulator RegA (regA), found in Clostridium saccharobutylicum.